We begin with the raw amino-acid sequence, 541 residues long: Serine/threonine-protein kinase akt-1 (541 aa).

One can recognise a PH domain in the interval 15–118 (DVVIEGWLHK…WIHAIESISK (104 aa)). The Protein kinase domain maps to 193–450 (FDFLKVLGKG…ALEICRADFF (258 aa)). ATP is bound by residues 199 to 207 (LGKGTFGKV) and Lys-222. Asp-316 functions as the Proton acceptor in the catalytic mechanism. Position 350 is a phosphothreonine (Thr-350). The 78-residue stretch at 451-528 (RTVDWEATYR…HNVMGSINRI (78 aa)) folds into the AGC-kinase C-terminal domain. Ser-517 bears the Phosphoserine mark.

It belongs to the protein kinase superfamily. AGC Ser/Thr protein kinase family. RAC subfamily. In terms of assembly, interacts with pdk-1, sgk-1, akt-2 and daf-16. Part of a complex containing sgk-1, akt-1 and akt-2. Interacts with cmd-1 in the presence of Ca(2+). Interacts with let-92 phosphatase regulatory subunit pptr-1. Mg(2+) serves as cofactor. Expressed in neurons, muscle cells of the pharynx, rectal gland cells, vulva and spermatheca.

It carries out the reaction L-seryl-[protein] + ATP = O-phospho-L-seryl-[protein] + ADP + H(+). The catalysed reaction is L-threonyl-[protein] + ATP = O-phospho-L-threonyl-[protein] + ADP + H(+). With respect to regulation, phosphorylated and activated by pdk-1. In terms of biological role, acts downstream of PI3 kinase age-1 and kinase pdk-1 in the daf-2/insulin receptor-like transduction pathway. Phosphorylates Forkhead-related daf-16 and the longevity-promoting skn-1 transcription factors, which inhibits their entry into the nucleus and antagonizes their functions. Plays a role in maintaining the gonadal basement membrane through it's role in inhibiting daf-16 activity. Has an essential role in regulating developmental arrest at the dauer stage. Plays a role in immune function and pathogen resistance. Regulates salt chemotaxis learning. Downstream of age-1 and together with akt-2 and sgk-1, promotes cell survival during embryonic development. In Caenorhabditis elegans, this protein is Serine/threonine-protein kinase akt-1.